Consider the following 651-residue polypeptide: MSEKIHPVPKQVKAQALIDKEKYLKWYEESVENPDKFWGKHGKRIDWFKPYTKVKNTSFTGKVSIKWFEDGQTNVSYNCIDRHLKTNGDQVAIIWEGDNPYIDKKITYNELYEHVCRMANVLKKHGVKKGDRVTIYMPMIPEAAYAMLACARIGAVHSVVFGGFSPEALAGRIVDCESTFVITCDEGVRGGKPVPLKDNTDTAIHIAARQHVNVSKVLVVRRTGGKTGWAPGRDLWYHQEVATVKAECPPVKMKAEDPLFILYTSGSTGKPKGVLHTTGGYLVYASMTHEYVFDYHHGDIYWCTADVGWVTGHSYIVYGPLSNCATTLMFEGVPNFPDQGRFWEVIDKHKVNIFYTAPTAIRSLMGAGDDFVTRSSRSSLRLLGTVGEPINPEAWEWYYNVVGDKRCPVIDTWWQTETGGHMITPLPGAIDLKPGSATVPFFGVKPELVDNEGKVLEGAADGNLCIADSWPGQMRTVYGDHERFIQTYFSTYKGKYFTGDGCRRDEDGYYWITGRVDDVLNVSGHRLGTAEVESALVSHNLVSEAAVVGYPHAIKGQGIYCYVTLMAGHEGTDTLRQELVKHVRAEIGPIASPDKIQFAPGLPKTRSGKIMRRILRKIAEDDFGALGDTSTLADPAVVDDLIANRQNKATA.

CoA-binding positions include 189-192, Thr311, and Asn335; that span reads RGGK. ATP contacts are provided by residues 387 to 389, 411 to 416, Asp500, and Arg515; these read GEP and DTWWQT. Ser523 serves as a coordination point for CoA. Arg526 contributes to the ATP binding site. The Mg(2+) site is built by Val537, His539, and Val542. Arg584 contacts CoA. N6-acetyllysine is present on Lys609.

It belongs to the ATP-dependent AMP-binding enzyme family. Mg(2+) serves as cofactor. Acetylated. Deacetylation by the SIR2-homolog deacetylase activates the enzyme.

The catalysed reaction is acetate + ATP + CoA = acetyl-CoA + AMP + diphosphate. Its function is as follows. Catalyzes the conversion of acetate into acetyl-CoA (AcCoA), an essential intermediate at the junction of anabolic and catabolic pathways. AcsA undergoes a two-step reaction. In the first half reaction, AcsA combines acetate with ATP to form acetyl-adenylate (AcAMP) intermediate. In the second half reaction, it can then transfer the acetyl group from AcAMP to the sulfhydryl group of CoA, forming the product AcCoA. This is Acetyl-coenzyme A synthetase from Rhizobium etli (strain ATCC 51251 / DSM 11541 / JCM 21823 / NBRC 15573 / CFN 42).